The primary structure comprises 343 residues: GTPase Obg (343 aa).

Residues 1–159 form the Obg domain; that stretch reads MKFIDEVKIQ…FELRLELRVL (159 aa). An OBG-type G domain is found at 160–334; that stretch reads ADVGLLGLPN…LIYAIMGHLQ (175 aa). GTP-binding positions include 166 to 173, 191 to 195, 213 to 216, 284 to 287, and 315 to 317; these read GLPNAGKS, FTTLY, DIPG, NKVD, and SAL. 2 residues coordinate Mg(2+): Ser173 and Thr193.

Belongs to the TRAFAC class OBG-HflX-like GTPase superfamily. OBG GTPase family. Monomer. Requires Mg(2+) as cofactor.

It is found in the cytoplasm. Its function is as follows. An essential GTPase which binds GTP, GDP and possibly (p)ppGpp with moderate affinity, with high nucleotide exchange rates and a fairly low GTP hydrolysis rate. Plays a role in control of the cell cycle, stress response, ribosome biogenesis and in those bacteria that undergo differentiation, in morphogenesis control. This chain is GTPase Obg, found in Nitrosomonas europaea (strain ATCC 19718 / CIP 103999 / KCTC 2705 / NBRC 14298).